Here is a 351-residue protein sequence, read N- to C-terminus: Biotin synthase (351 aa).

The Radical SAM core domain maps to 42 to 269 (NEVQVSTLLS…KSHVRLSAGR (228 aa)). [4Fe-4S] cluster is bound by residues cysteine 57, cysteine 61, and cysteine 64. [2Fe-2S] cluster is bound by residues cysteine 101, cysteine 132, cysteine 192, and arginine 264.

It belongs to the radical SAM superfamily. Biotin synthase family. In terms of assembly, homodimer. Requires [4Fe-4S] cluster as cofactor. It depends on [2Fe-2S] cluster as a cofactor.

The catalysed reaction is (4R,5S)-dethiobiotin + (sulfur carrier)-SH + 2 reduced [2Fe-2S]-[ferredoxin] + 2 S-adenosyl-L-methionine = (sulfur carrier)-H + biotin + 2 5'-deoxyadenosine + 2 L-methionine + 2 oxidized [2Fe-2S]-[ferredoxin]. It participates in cofactor biosynthesis; biotin biosynthesis; biotin from 7,8-diaminononanoate: step 2/2. Its function is as follows. Catalyzes the conversion of dethiobiotin (DTB) to biotin by the insertion of a sulfur atom into dethiobiotin via a radical-based mechanism. The protein is Biotin synthase of Psychromonas ingrahamii (strain DSM 17664 / CCUG 51855 / 37).